A 167-amino-acid polypeptide reads, in one-letter code: U-scoloptoxin-Er5c (167 aa).

The signal sequence occupies residues 1 to 22 (MKTNCEFPLLCLLIVLVANVEG). The propeptide occupies 23–94 (EVEDTGLKMV…KRLWRNWERR (72 aa)). 3 RLWRNWE repeats span residues 34 to 40 (RLWRNWE), 61 to 67 (RLWRNWE), and 86 to 92 (RLWRNWE). At Q95 the chain carries Pyrrolidone carboxylic acid. The RLWRNWE 4; approximate repeat unit spans residues 107-113 (ELWRNWE). Residues 112–118 (WEDLKRR) constitute a propeptide that is removed on maturation. Q119 carries the post-translational modification Pyrrolidone carboxylic acid. The RLWRNWE 5 repeat unit spans residues 134 to 140 (RLWRNWE). A propeptide spanning residues 139–167 (WEDNHATLRKRSADSLSRQKRLGRERGKE) is cleaved from the precursor. The tract at residues 147–167 (RKRSADSLSRQKRLGRERGKE) is disordered.

The protein belongs to the scoloptoxin-08 family. In terms of tissue distribution, expressed by the venom gland.

The protein resides in the secreted. The chain is U-scoloptoxin-Er5c from Ethmostigmus rubripes (Giant centipede).